We begin with the raw amino-acid sequence, 251 residues long: E3 ubiquitin-protein ligase Os06g0535400 (251 aa).

A run of 3 helical transmembrane segments spans residues 28–48 (VVAA…YCFA), 102–122 (LANR…IVVF), and 127–147 (ADVV…VWLS). The segment at 185-227 (CCVCLAGMREAQALRDLPRCGHRFHAKCIGKWLTAHPTCPVCR) adopts an RING-type; atypical zinc-finger fold.

The protein localises to the membrane. The catalysed reaction is S-ubiquitinyl-[E2 ubiquitin-conjugating enzyme]-L-cysteine + [acceptor protein]-L-lysine = [E2 ubiquitin-conjugating enzyme]-L-cysteine + N(6)-ubiquitinyl-[acceptor protein]-L-lysine.. The protein operates within protein modification; protein ubiquitination. In terms of biological role, possesses E3 ubiquitin-protein ligase in vitro. The chain is E3 ubiquitin-protein ligase Os06g0535400 from Oryza sativa subsp. japonica (Rice).